Here is a 139-residue protein sequence, read N- to C-terminus: D-ribose pyranase (139 aa).

The Proton donor role is filled by His20. Residues Asp28, His106, and 128–130 (YAN) contribute to the substrate site.

It belongs to the RbsD / FucU family. RbsD subfamily. As to quaternary structure, homodecamer.

The protein resides in the cytoplasm. It carries out the reaction beta-D-ribopyranose = beta-D-ribofuranose. Its pathway is carbohydrate metabolism; D-ribose degradation; D-ribose 5-phosphate from beta-D-ribopyranose: step 1/2. Catalyzes the interconversion of beta-pyran and beta-furan forms of D-ribose. The sequence is that of D-ribose pyranase from Escherichia coli O45:K1 (strain S88 / ExPEC).